Reading from the N-terminus, the 273-residue chain is SUMO-1 cysteine protease S273R (273 aa).

Residues His-168 and Asn-187 contribute to the active site. Position 226 (Gln-226) interacts with substrate. Cys-232 (nucleophile) is an active-site residue.

The protein belongs to the peptidase C63 family.

The protein localises to the host cytoplasm. It is found in the virion. Its function is as follows. Cysteine protease that plays several role during infection including processing of the structural polyprotein or inhibition of the host immune response. Catalyzes the maturation of the pp220 and pp62 polyprotein precursors into core-shell proteins. Plays a role in the disruption of host pyroptosis via specific cleavage of gasdermin D/GSDMD. In addition, strongly decreases the host cGAS-STING signaling by targeting IKBKE via its enzymatic activity. Also impairs host FOXJ1-mediated antiviral effect via degradation of FOXJ1. In Ornithodoros (relapsing fever ticks), this protein is SUMO-1 cysteine protease S273R.